Reading from the N-terminus, the 329-residue chain is Phosphatidylcholine:ceramide cholinephosphotransferase 3 (329 aa).

Residues 1-26 lie on the Cytoplasmic side of the membrane; sequence MAVPPVEMYSGSFWNRMRKPLPLRTQ. Residues 27-47 form a helical membrane-spanning segment; it reads VIRFTVVFVIVSFILAVALQI. Residues 48–74 lie on the Extracellular side of the membrane; it reads THERMPDPKVTKPLPDLGFELLTKVPG. A helical transmembrane segment spans residues 75–95; it reads MYVLADCCIGFLNILSVFTAF. At 96–147 the chain is on the cytoplasmic side; the sequence is KLYLLHRHCVGSGEPELPCNIPGVSRFFLSVWLCKENCRIELRNIHTIAWIR. Residues 148–168 form a helical membrane-spanning segment; sequence FITSYALLLLFRSAVIVMTSL. Residues 169 to 211 lie on the Extracellular side of the membrane; the sequence is PAPDDLCQNPPKIENPVKNVILTVLTAGAGSIHCGDLMYSGHT. Residues 212-232 form a helical membrane-spanning segment; that stretch reads VILTLHLMFHWIYGAMVHWSF. Arginine 233 is a topological domain (cytoplasmic). The helical transmembrane segment at 234 to 254 threads the bilayer; it reads PVVTVVAIFGYYCIVASRFHY. At 255–257 the chain is on the extracellular side; it reads TDD. Residues 258-278 form a helical membrane-spanning segment; the sequence is VLVAIYLTIATFIAVGHNADG. The Cytoplasmic segment spans residues 279–329; that stretch reads APWQLQLFIRWWPCCGANSREVTEDSQPVMVAFKSEAAGQSSRKVVDERNH.

This sequence belongs to the sphingomyelin synthase family.

Its subcellular location is the membrane. The catalysed reaction is an N-acylsphing-4-enine + a 1,2-diacyl-sn-glycero-3-phosphocholine = a sphingomyelin + a 1,2-diacyl-sn-glycerol. It catalyses the reaction an N-acylsphinganine + a 1,2-diacyl-sn-glycero-3-phosphocholine = an N-acylsphinganine-1-phosphocholine + a 1,2-diacyl-sn-glycerol. The enzyme catalyses an N-acylsphing-4-enine + a 1,2-diacyl-sn-glycero-3-phosphoethanolamine = an N-acylsphing-4-enine 1-phosphoethanolamine + a 1,2-diacyl-sn-glycerol. It carries out the reaction an N-acylsphinganine + a 1,2-diacyl-sn-glycero-3-phosphoethanolamine = an N-acylsphinganine-1-phosphoethanolamine + a 1,2-diacyl-sn-glycerol. Functionally, bifunctional sphingomyelin (SM)/ethanolamine phosphorylceramide (EPC) synthase with minimal inositol phosphorylceramide (IPC) synthase activity. Specificity is likely to be defined by residues in the lumenal catalytic domain that interact with the polar head groups of the phospholipid donors. SM is synthesized by both stages of the parasite life cycle, bloodstream forms (BSF) and procyclic forms (PCF), by transferring the phosphocholine from a 1,2-diacyl-sn-glycero-3-phosphocholine to an N-acylsphing-4-enine (ceramide) or an N-acylsphinganine (dihydroceramide). Similarly, EPC is synthesized by transferring phosphoethanolamine from a 1,2-diacyl-sn-glycero-3-phosphoethanolamine to ceramide or dihydroceramide by BSF and PCF, while IPC is confined to PCF. The ceramide/dihydroceramide ratios are skewed towards dihydroceramide in PCF parasites and ceramide in BSF parasites, this is likely due to differential expression and/or regulation of dihydroceramide desaturase, the enzyme responsible for converting dihydroceramide to ceramide. The sequence is that of Phosphatidylcholine:ceramide cholinephosphotransferase 3 from Trypanosoma brucei brucei.